We begin with the raw amino-acid sequence, 327 residues long: Ribonucleoside-diphosphate reductase small chain (327 aa).

Positions 70, 101, and 104 each coordinate Fe cation. Y108 is a catalytic residue. 3 residues coordinate Fe cation: E164, E198, and H201.

It belongs to the ribonucleoside diphosphate reductase small chain family. In terms of assembly, heterotetramer composed of a homodimer of the large subunit (R1) and a homodimer of the small subunit (R2). Larger multisubunit protein complex are also active, composed of (R1)n(R2)n. Requires Fe cation as cofactor.

The enzyme catalyses a 2'-deoxyribonucleoside 5'-diphosphate + [thioredoxin]-disulfide + H2O = a ribonucleoside 5'-diphosphate + [thioredoxin]-dithiol. Functionally, ribonucleoside-diphosphate reductase holoenzyme provides the precursors necessary for viral DNA synthesis. Allows virus growth in non-dividing cells. Catalyzes the biosynthesis of deoxyribonucleotides from the corresponding ribonucleotides. The chain is Ribonucleoside-diphosphate reductase small chain from Ornithodoros (relapsing fever ticks).